The chain runs to 152 residues: Snaclec 5 (152 aa).

The N-terminal stretch at 1–23 is a signal peptide; it reads MGRFIFLSSGLLVVFLSLSGTGA. 3 cysteine pairs are disulfide-bonded: Cys27–Cys38, Cys55–Cys148, and Cys123–Cys140. The C-type lectin domain occupies 34 to 149; sequence YGQHCYRAFK…CASHNPFVCK (116 aa).

Belongs to the snaclec family. Heterodimer; disulfide-linked. As to expression, expressed by the venom gland.

The protein localises to the secreted. Interferes with one step of hemostasis (modulation of platelet aggregation, or coagulation cascade, for example). The polypeptide is Snaclec 5 (Bitis arietans (African puff adder)).